Consider the following 254-residue polypeptide: 3-deoxy-manno-octulosonate cytidylyltransferase (254 aa).

It belongs to the KdsB family.

It localises to the cytoplasm. It carries out the reaction 3-deoxy-alpha-D-manno-oct-2-ulosonate + CTP = CMP-3-deoxy-beta-D-manno-octulosonate + diphosphate. It functions in the pathway nucleotide-sugar biosynthesis; CMP-3-deoxy-D-manno-octulosonate biosynthesis; CMP-3-deoxy-D-manno-octulosonate from 3-deoxy-D-manno-octulosonate and CTP: step 1/1. It participates in bacterial outer membrane biogenesis; lipopolysaccharide biosynthesis. Functionally, activates KDO (a required 8-carbon sugar) for incorporation into bacterial lipopolysaccharide in Gram-negative bacteria. This Nitrobacter winogradskyi (strain ATCC 25391 / DSM 10237 / CIP 104748 / NCIMB 11846 / Nb-255) protein is 3-deoxy-manno-octulosonate cytidylyltransferase.